We begin with the raw amino-acid sequence, 167 residues long: MPLALEGKKAIVAEVSEAAQDALSVVVADSRGVAVSAMTELRKQARENGVQVRVVRNTLARRALEGTPWECLNETFSGPTLLAFSYEHPGAAARLFKEFAKNEKDFEVKALAYEGEFIPASELDRLATLPTRDEAIAKLMSVMKEASAGKLVRTLAALRDQKQEEAA.

The protein belongs to the universal ribosomal protein uL10 family. In terms of assembly, part of the ribosomal stalk of the 50S ribosomal subunit. The N-terminus interacts with L11 and the large rRNA to form the base of the stalk. The C-terminus forms an elongated spine to which L12 dimers bind in a sequential fashion forming a multimeric L10(L12)X complex.

Functionally, forms part of the ribosomal stalk, playing a central role in the interaction of the ribosome with GTP-bound translation factors. In Chromohalobacter salexigens (strain ATCC BAA-138 / DSM 3043 / CIP 106854 / NCIMB 13768 / 1H11), this protein is Large ribosomal subunit protein uL10.